The sequence spans 173 residues: Transmembrane protein 240 (173 aa).

2 helical membrane-spanning segments follow: residues 5-25 and 90-110; these read ANTM…ACLM and LMLG…MDGV. Position 169 is a phosphoserine (Ser169).

Its subcellular location is the synapse. It is found in the cell membrane. In Mus musculus (Mouse), this protein is Transmembrane protein 240 (Tmem240).